A 221-amino-acid polypeptide reads, in one-letter code: Probable transaldolase (221 aa).

The Schiff-base intermediate with substrate role is filled by lysine 83.

It belongs to the transaldolase family. Type 3B subfamily.

The protein resides in the cytoplasm. It catalyses the reaction D-sedoheptulose 7-phosphate + D-glyceraldehyde 3-phosphate = D-erythrose 4-phosphate + beta-D-fructose 6-phosphate. The protein operates within carbohydrate degradation; pentose phosphate pathway; D-glyceraldehyde 3-phosphate and beta-D-fructose 6-phosphate from D-ribose 5-phosphate and D-xylulose 5-phosphate (non-oxidative stage): step 2/3. Transaldolase is important for the balance of metabolites in the pentose-phosphate pathway. The chain is Probable transaldolase from Herpetosiphon aurantiacus (strain ATCC 23779 / DSM 785 / 114-95).